Consider the following 1088-residue polypeptide: Ran-binding protein 17 (1088 aa).

At Ala-2 the chain carries N-acetylalanine. Ser-569 bears the Phosphoserine mark.

Belongs to the exportin family. Binds to nucleoporins and the GTP-bound form of Ran. As to expression, highly expressed in testis, moderately in pancreas and weakly in other tissues studied.

Its subcellular location is the cytoplasm. The protein resides in the nucleus. It localises to the nuclear pore complex. Its function is as follows. May function as a nuclear transport receptor. This is Ran-binding protein 17 (RANBP17) from Homo sapiens (Human).